A 61-amino-acid chain; its full sequence is Metallothionein-2 (61 aa).

Met1 is modified (N-acetylmethionine). A beta region spans residues 1 to 29 (MDPNCSCATDGSCSCAGSCKCKECKCTTC). A divalent metal cation is bound by residues Cys5, Cys7, Cys13, Cys15, Cys19, Cys21, Cys24, Cys26, Cys29, Cys33, Cys34, Cys36, Cys37, Cys41, Cys44, Cys48, Cys50, and Cys57. An alpha region spans residues 30–61 (KKSCCSCCPVGCAKCSQGCVCKEASDKCSCCA). The residue at position 58 (Ser58) is a Phosphoserine. A divalent metal cation contacts are provided by Cys59 and Cys60.

The protein belongs to the metallothionein superfamily. Type 1 family.

In terms of biological role, metallothioneins have a high content of cysteine residues that bind various heavy metals; these proteins are transcriptionally regulated by both heavy metals and glucocorticoids. In Cricetulus griseus (Chinese hamster), this protein is Metallothionein-2 (MT2).